The chain runs to 483 residues: NADH-quinone oxidoreductase subunit N (483 aa).

13 consecutive transmembrane segments (helical) span residues 7–27, 33–53, 76–96, 108–128, 161–181, 196–216, 235–255, 272–292, 297–317, 323–343, 369–389, 402–422, and 442–462; these read AILTPEIVLSLFAMAGLLGAV, ALASAMCWGTAALFIIMAFYI, FAKITILLSAAAILMISQDYM, VLIILAVVGMMIMVSAGDLIA, FVLGALSSGLLLYGSSLAYGF, GGDMPLGLLFGLVFITAGLAF, PTPITALFATAPKVAAMALFA, IVAFLAVVSMFLGAIAAIGQT, LMAYSSISHMGFALMGLSAGT, AMLIYMAIYVAMNIGTFAFIL, ALAILVMMFSLAGVPPLLGFF, GLVWLAIAGVIASVIGAFYYI, and MGLVPYVGLIAMALVIGLGWV.

Belongs to the complex I subunit 2 family. As to quaternary structure, NDH-1 is composed of 14 different subunits. Subunits NuoA, H, J, K, L, M, N constitute the membrane sector of the complex.

Its subcellular location is the cell inner membrane. The catalysed reaction is a quinone + NADH + 5 H(+)(in) = a quinol + NAD(+) + 4 H(+)(out). Its function is as follows. NDH-1 shuttles electrons from NADH, via FMN and iron-sulfur (Fe-S) centers, to quinones in the respiratory chain. The immediate electron acceptor for the enzyme in this species is believed to be ubiquinone. Couples the redox reaction to proton translocation (for every two electrons transferred, four hydrogen ions are translocated across the cytoplasmic membrane), and thus conserves the redox energy in a proton gradient. In Jannaschia sp. (strain CCS1), this protein is NADH-quinone oxidoreductase subunit N.